The following is a 130-amino-acid chain: MVMAAAPLQNLCYDGLLQVTSGGNISLPVPSNQVIYAHFEHVDATPAEQGQAGVSVSELQILDALVERLIVQRRVAAEAADMAVQKRQETLLRAAELFSQKQVDETKRRGESLPYTSVEVQGPELFDLRA.

This is an uncharacterized protein from Treponema pallidum (strain Nichols).